The sequence spans 178 residues: Deoxyuridine 5'-triphosphate nucleotidohydrolase (178 aa).

Belongs to the dUTPase family. It depends on Mg(2+) as a cofactor.

The enzyme catalyses dUTP + H2O = dUMP + diphosphate + H(+). It functions in the pathway pyrimidine metabolism; dUMP biosynthesis; dUMP from dCTP (dUTP route): step 2/2. In terms of biological role, this enzyme is involved in nucleotide metabolism: it produces dUMP, the immediate precursor of thymidine nucleotides and it decreases the intracellular concentration of dUTP so that uracil cannot be incorporated into DNA. The protein is Deoxyuridine 5'-triphosphate nucleotidohydrolase of Fowl adenovirus A serotype 1 (strain CELO / Phelps) (FAdV-1).